Reading from the N-terminus, the 427-residue chain is Enolase (427 aa).

Glutamine 163 is a (2R)-2-phosphoglycerate binding site. Glutamate 205 serves as the catalytic Proton donor. Positions 242, 285, and 312 each coordinate Mg(2+). Positions 337, 366, 367, and 388 each coordinate (2R)-2-phosphoglycerate. The active-site Proton acceptor is the lysine 337.

This sequence belongs to the enolase family. It depends on Mg(2+) as a cofactor.

The protein localises to the cytoplasm. The protein resides in the secreted. Its subcellular location is the cell surface. It carries out the reaction (2R)-2-phosphoglycerate = phosphoenolpyruvate + H2O. It functions in the pathway carbohydrate degradation; glycolysis; pyruvate from D-glyceraldehyde 3-phosphate: step 4/5. Catalyzes the reversible conversion of 2-phosphoglycerate (2-PG) into phosphoenolpyruvate (PEP). It is essential for the degradation of carbohydrates via glycolysis. The polypeptide is Enolase (Laribacter hongkongensis (strain HLHK9)).